The sequence spans 112 residues: Nucleoid-associated protein BCI_0116 (112 aa).

Belongs to the YbaB/EbfC family. Homodimer.

Its subcellular location is the cytoplasm. The protein localises to the nucleoid. Its function is as follows. Binds to DNA and alters its conformation. May be involved in regulation of gene expression, nucleoid organization and DNA protection. This is Nucleoid-associated protein BCI_0116 from Baumannia cicadellinicola subsp. Homalodisca coagulata.